A 556-amino-acid polypeptide reads, in one-letter code: MNLAVASFRGNFGVLSQCSSCCSLQFQPFVAATSSLNFGQTGTSRRKKDLKLERVFRKRETLVRVTETQTEPEGNDDEDNKEGKESSADDPPTKIPTELNSQSTVVNEAPGNEEENKAQFSSQDGDKLEVSSGSPLPGVNVSIIIHVIYKDDSIMFSGCLSFIKSCCEQPLQLDDSMRLPKETIDILRGQVFGFDTFFVTSQEPYEGGVLFKGNLRGKPATSYEKIKTRMENNFGDQYKLFLLTNPEDDKPVAVVVPRRSLEPETTAVPEWFAAGSFGLVALFTLFLRNVPALQSDLLSAFDNLELLKDGLPGALVTALVLGVHELGHILVANSLGIKLGVPFFVPSWQIGSFGAITRIKNIVAKREDLLKVAAAGPLAGFSLGLILFLIGLFVPPSDGIGVVVDASVFHESFLAGGIAKLLLGDALKEGTSISLNPLVIWAWAGLLINGINSIPAGELDGGKIAFSIWGRKTATRLTGASIALLGLSALFSDVAFYWVVLIFFLQRGPIAPLAEEITVPDDKYVSLGILVLFLSLLVCLPYPFAFTGNEAMMIGL.

A chloroplast-targeting transit peptide spans 1–64 (MNLAVASFRG…VFRKRETLVR (64 aa)). The segment at 63 to 133 (VRVTETQTEP…DGDKLEVSSG (71 aa)) is disordered. The next 7 helical transmembrane spans lie at 267–287 (AVPE…TLFL), 311–331 (LPGA…HILV), 336–356 (GIKL…FGAI), 374–394 (AAGP…GLFV), 437–457 (PLVI…IPAG), 484–504 (LLGL…LIFF), and 527–547 (LGIL…FAFT).

Belongs to the peptidase M50B family.

The protein resides in the plastid. The protein localises to the chloroplast membrane. Probable membrane-associated metalloprotease that may be involved in chloroplast development. This Arabidopsis thaliana (Mouse-ear cress) protein is Probable zinc metalloprotease EGY2, chloroplastic (EGY2).